Reading from the N-terminus, the 233-residue chain is Phosphatidylserine decarboxylase proenzyme (233 aa).

The active-site Schiff-base intermediate with substrate; via pyruvic acid is the Ser190. At Ser190 the chain carries Pyruvic acid (Ser); by autocatalysis.

It belongs to the phosphatidylserine decarboxylase family. PSD-A subfamily. Heterodimer of a large membrane-associated beta subunit and a small pyruvoyl-containing alpha subunit. It depends on pyruvate as a cofactor. In terms of processing, is synthesized initially as an inactive proenzyme. Formation of the active enzyme involves a self-maturation process in which the active site pyruvoyl group is generated from an internal serine residue via an autocatalytic post-translational modification. Two non-identical subunits are generated from the proenzyme in this reaction, and the pyruvate is formed at the N-terminus of the alpha chain, which is derived from the carboxyl end of the proenzyme. The post-translation cleavage follows an unusual pathway, termed non-hydrolytic serinolysis, in which the side chain hydroxyl group of the serine supplies its oxygen atom to form the C-terminus of the beta chain, while the remainder of the serine residue undergoes an oxidative deamination to produce ammonia and the pyruvoyl prosthetic group on the alpha chain.

The protein localises to the cell membrane. It carries out the reaction a 1,2-diacyl-sn-glycero-3-phospho-L-serine + H(+) = a 1,2-diacyl-sn-glycero-3-phosphoethanolamine + CO2. It participates in phospholipid metabolism; phosphatidylethanolamine biosynthesis; phosphatidylethanolamine from CDP-diacylglycerol: step 2/2. Its function is as follows. Catalyzes the formation of phosphatidylethanolamine (PtdEtn) from phosphatidylserine (PtdSer). This is Phosphatidylserine decarboxylase proenzyme from Xanthobacter autotrophicus (strain ATCC BAA-1158 / Py2).